The sequence spans 96 residues: Large ribosomal subunit protein uL23 (96 aa).

It belongs to the universal ribosomal protein uL23 family. In terms of assembly, part of the 50S ribosomal subunit. Contacts protein L29, and trigger factor when it is bound to the ribosome.

Its function is as follows. One of the early assembly proteins it binds 23S rRNA. One of the proteins that surrounds the polypeptide exit tunnel on the outside of the ribosome. Forms the main docking site for trigger factor binding to the ribosome. The protein is Large ribosomal subunit protein uL23 of Solidesulfovibrio magneticus (strain ATCC 700980 / DSM 13731 / RS-1) (Desulfovibrio magneticus).